Here is a 377-residue protein sequence, read N- to C-terminus: MALQGWVQRGWRCGPAWAPPLGGGYRELSATQAPRLLGRRFNLFVQQKCGFRKAPRKVEPRRSDTGSSGEAYKRSALIPPLEETVFYPSPYPIRTLVKPFFFTIGFTGCAFGSAAIWQYESLKSRVQSYFDGIKADWLDSIRPQKEGNLRKEINKWWNSLSDGQRTVTGIIAANALVFCLWRVPSLQRTMIRYFTSNPASKVLCSPMLLSTFSHFSLFHMAANMYVLWSFSSSIVNILGQEQFVAVYLSAGVISNFVSYVCKVATGRYGPSLGASGAIMTVLAAVCTKIPEGRLAIIFLPVFTFTAGNALKAIIAMDTAGMILGWKFFDHAAHLGGALFGIWYITYGHELIWKNREPLVKIWHEIRTNGPKKGGGSK.

Residues 1 to 50 (MALQGWVQRGWRCGPAWAPPLGGGYRELSATQAPRLLGRRFNLFVQQKCG) constitute a mitochondrion transit peptide. At 51–99 (FRKAPRKVEPRRSDTGSSGEAYKRSALIPPLEETVFYPSPYPIRTLVKP) the chain is on the mitochondrial matrix side. Phosphoserine occurs at positions 63 and 68. The chain crosses the membrane as a helical span at residues 100–119 (FFFTIGFTGCAFGSAAIWQY). Residues 120–165 (ESLKSRVQSYFDGIKADWLDSIRPQKEGNLRKEINKWWNSLSDGQR) lie on the Mitochondrial intermembrane side of the membrane. A helical transmembrane segment spans residues 166–185 (TVTGIIAANALVFCLWRVPS). Topologically, residues 186–205 (LQRTMIRYFTSNPASKVLCS) are mitochondrial matrix. Residues 206 to 228 (PMLLSTFSHFSLFHMAANMYVLW) form a helical membrane-spanning segment. Residues 229-242 (SFSSSIVNILGQEQ) are Mitochondrial intermembrane-facing. Residues 243–260 (FVAVYLSAGVISNFVSYV) traverse the membrane as a helical segment. The Mitochondrial matrix segment spans residues 261 to 270 (CKVATGRYGP). The chain crosses the membrane as a helical span at residues 271–287 (SLGASGAIMTVLAAVCT). S275 acts as the Nucleophile in catalysis. Residues 288 to 293 (KIPEGR) are Mitochondrial intermembrane-facing. The helical transmembrane segment at 294 to 316 (LAIIFLPVFTFTAGNALKAIIAM) threads the bilayer. The Mitochondrial matrix segment spans residues 317 to 330 (DTAGMILGWKFFDH). A helical transmembrane segment spans residues 331 to 352 (AAHLGGALFGIWYITYGHELIW). The active site involves H333. The Mitochondrial intermembrane portion of the chain corresponds to 353–377 (KNREPLVKIWHEIRTNGPKKGGGSK).

Belongs to the peptidase S54 family. In terms of assembly, interacts with PSEN1 and PSEN2. Binds OPA1. In terms of processing, P-beta is proteolytically processed (beta-cleavage) in a PARL-dependent manner.

The protein localises to the mitochondrion inner membrane. Its subcellular location is the nucleus. It catalyses the reaction Cleaves type-1 transmembrane domains using a catalytic dyad composed of serine and histidine that are contributed by different transmembrane domains.. Its function is as follows. Required for the control of apoptosis during postnatal growth. Essential for proteolytic processing of an antiapoptotic form of OPA1 which prevents the release of mitochondrial cytochrome c in response to intrinsic apoptotic signals. Required for the maturation of PINK1 into its 52kDa mature form after its cleavage by mitochondrial-processing peptidase (MPP). Promotes cleavage of serine/threonine-protein phosphatase PGAM5 in damaged mitochondria in response to loss of mitochondrial membrane potential. Mediates differential cleavage of PINK1 and PGAM5 depending on the health status of mitochondria, disassociating from PINK1 and associating with PGAM5 in response to mitochondrial membrane potential loss. Required for processing of CLPB into a form with higher protein disaggregase activity by removing an autoinhibitory N-terminal peptide. Promotes processing of DIABLO/SMAC in the mitochondrion which is required for DIABLO apoptotic activity. Also required for cleavage of STARD7 and TTC19. Promotes changes in mitochondria morphology regulated by phosphorylation of P-beta domain. This is Presenilin-associated rhomboid-like protein, mitochondrial (Parl) from Mus musculus (Mouse).